Reading from the N-terminus, the 193-residue chain is uncharacterized protein (193 aa).

2 disordered regions span residues 1-67 and 110-160; these read MSGP…GPRS and QRTP…LPGS. Composition is skewed to low complexity over residues 50 to 64 and 148 to 160; these read GPQR…ARPG and AGAS…LPGS.

This is an uncharacterized protein from Homo sapiens (Human).